Reading from the N-terminus, the 258-residue chain is uncharacterized protein (258 aa).

Transmembrane regions (helical) follow at residues 38-58 (VFGLLIALICFSNVLCFLFIA), 72-92 (ALIFTLFIPFVTSLLANIIFI), and 111-131 (FLVICAFSSLPIVNIWLMLWW).

It localises to the cell membrane. This is an uncharacterized protein from Mycoplasma pneumoniae (strain ATCC 29342 / M129 / Subtype 1) (Mycoplasmoides pneumoniae).